Consider the following 453-residue polypeptide: Allantoinase (453 aa).

6 residues coordinate Zn(2+): histidine 59, histidine 61, lysine 146, histidine 186, histidine 242, and aspartate 315. Lysine 146 carries the post-translational modification N6-carboxylysine.

Belongs to the metallo-dependent hydrolases superfamily. Allantoinase family. Homotetramer. Zn(2+) serves as cofactor. Carboxylation allows a single lysine to coordinate two zinc ions.

The enzyme catalyses (S)-allantoin + H2O = allantoate + H(+). Its pathway is nitrogen metabolism; (S)-allantoin degradation; allantoate from (S)-allantoin: step 1/1. Its function is as follows. Catalyzes the conversion of allantoin (5-ureidohydantoin) to allantoic acid by hydrolytic cleavage of the five-member hydantoin ring. The chain is Allantoinase from Escherichia coli (strain SMS-3-5 / SECEC).